The primary structure comprises 243 residues: Carboxy-S-adenosyl-L-methionine synthase (243 aa).

Residues Y40, 65-67 (GSS), 90-91 (DN), 118-119 (DI), N133, and R200 contribute to the S-adenosyl-L-methionine site.

Belongs to the class I-like SAM-binding methyltransferase superfamily. Cx-SAM synthase family. As to quaternary structure, homodimer.

The enzyme catalyses prephenate + S-adenosyl-L-methionine = carboxy-S-adenosyl-L-methionine + 3-phenylpyruvate + H2O. In terms of biological role, catalyzes the conversion of S-adenosyl-L-methionine (SAM) to carboxy-S-adenosyl-L-methionine (Cx-SAM). This Shewanella denitrificans (strain OS217 / ATCC BAA-1090 / DSM 15013) protein is Carboxy-S-adenosyl-L-methionine synthase.